Reading from the N-terminus, the 274-residue chain is Formamidopyrimidine-DNA glycosylase (274 aa).

The active-site Schiff-base intermediate with DNA is P2. E3 (proton donor) is an active-site residue. Residue K58 is the Proton donor; for beta-elimination activity of the active site. H92 and R111 together coordinate DNA. An FPG-type; degenerate zinc finger spans residues 239–273 (HVYGREGEPCERCGTIIEKIKVAQRGTHFCPLEQR). R263 serves as the catalytic Proton donor; for delta-elimination activity.

Belongs to the FPG family. In terms of assembly, monomer. The cofactor is Zn(2+).

The enzyme catalyses Hydrolysis of DNA containing ring-opened 7-methylguanine residues, releasing 2,6-diamino-4-hydroxy-5-(N-methyl)formamidopyrimidine.. It carries out the reaction 2'-deoxyribonucleotide-(2'-deoxyribose 5'-phosphate)-2'-deoxyribonucleotide-DNA = a 3'-end 2'-deoxyribonucleotide-(2,3-dehydro-2,3-deoxyribose 5'-phosphate)-DNA + a 5'-end 5'-phospho-2'-deoxyribonucleoside-DNA + H(+). Its function is as follows. Involved in base excision repair of DNA damaged by oxidation or by mutagenic agents. Acts as a DNA glycosylase that recognizes and removes damaged bases. Has a preference for oxidized purines, such as 7,8-dihydro-8-oxoguanine (8-oxoG). Has AP (apurinic/apyrimidinic) lyase activity and introduces nicks in the DNA strand. Cleaves the DNA backbone by beta-delta elimination to generate a single-strand break at the site of the removed base with both 3'- and 5'-phosphates. The chain is Formamidopyrimidine-DNA glycosylase from Lactiplantibacillus plantarum (strain ATCC BAA-793 / NCIMB 8826 / WCFS1) (Lactobacillus plantarum).